A 383-amino-acid chain; its full sequence is Seipin (383 aa).

The Cytoplasmic segment spans residues 1–27; that stretch reads MVNDPPVPALLWAQEVGHVLAGRARRL. The helical transmembrane segment at 28–48 threads the bilayer; that stretch reads MLQFGVLFCTILLLLWVSVFL. Residues 49–242 are Lumenal-facing; that stretch reads YGSFYYSYMP…TCAFVGVASN (194 aa). N88 and N242 each carry an N-linked (GlcNAc...) asparagine glycan. Residues 243–263 form a helical membrane-spanning segment; that stretch reads FTFLSVIVLFSYMQWVWGAVW. At 264–383 the chain is on the cytoplasmic side; it reads PRHRFSLQVN…LRQRPTCSSS (120 aa). Positions 279–383 are disordered; it reads NSHHGAPRRI…LRQRPTCSSS (105 aa). S289 is subject to Phosphoserine. Polar residues predominate over residues 292-302; sequence QPGQESTQQSD. The span at 322-332 shows a compositional bias: basic and acidic residues; that stretch reads EEEKPEKRPLN. A phosphoserine mark is found at S342 and S345. A compositionally biased stretch (low complexity) spans 353–371; that stretch reads TEANPPTSASASALAPETL.

It belongs to the seipin family. Undecamer (an oligomer having eleven subunits). Oligomerization is important for its function in lipid droplet formation. Interacts with LDAF1 to form an oligomeric complex. Interacts with RAB18. Interacts with ZFYVE1 in a RAB18-dependent manner. As to expression, expressed in the paraventricular nucleus of the hypothalamus (PVN) and brainstem dorsal vagal complex (DVC) in oxytocin and catecholaminergic neurons (at protein level). Highest expression detected in subcutaneous and epididymal white adipose tissue, brown adipose tissue and testis. Also expressed in brain, skeletal muscle and adrenal gland, with lower levels detected in liver, heart, kidney, spleen, lung and small intestine. In brain, detected in piriform cortex, olfactory tubercle, islands of Calleja, lateral septal nucleus, medial septal nucleus, nucleus of the vertical limb of the diagonal band, nucleus of the horizontal limb of the diagonal band, preoptic area, paraventricular thalamic nucleus, lateral globus pallidus, supraoptic nucleus, suprachiasmatic nucleus, subfornical organ, paraventricular nucleus of the hypothalamus, zona incerta, dorsomedial nucleus of the hypothalamus, ventromedial nucleus of the hypothalamus, arcuate nucleus of the hypothalamus, basomedial amygdaloid nucleus, medial amygdaloid nucleus, medial habenular, pyramidal cell layer of the hippocampus, granular layer of the dentate gyrus, posterior hypothalamus, supramammilliary nucleus, premammillary nucleus, nucleus of Darkschewitsch, Edinger-Westphal nucleus, ventral tegmental area, dorsal raphe nucleus, periaqueductal gray, median raphe nucleus, lateral parabrachial nucleus, dorsal tegmental nucleus, laterodorsal tegmental nucleus, locus coeruleus, Barrington's nucleus, medial vestibular nucleus, ambiguous nucleus, dorsal vagal complex and hypoglossal nucleus.

The protein resides in the endoplasmic reticulum membrane. Its subcellular location is the lipid droplet. In terms of biological role, plays a crucial role in the formation of lipid droplets (LDs) which are storage organelles at the center of lipid and energy homeostasis. In association with LDAF1, defines the sites of LD formation in the ER. Also required for growth and maturation of small nascent LDs into larger mature LDs. Mediates the formation and/or stabilization of endoplasmic reticulum-lipid droplets (ER-LD) contacts, facilitating protein and lipid delivery from the ER into growing LDs. Regulates the maturation of ZFYVE1-positive nascent LDs and the function of the RAB18-ZFYVE1 complex in mediating the formation of ER-LD contacts. Binds anionic phospholipids including phosphatidic acid. Plays an important role in the differentiation and development of adipocytes. In Mus musculus (Mouse), this protein is Seipin.